Consider the following 223-residue polypeptide: Small ribosomal subunit protein uS3 (223 aa).

One can recognise a KH type-2 domain in the interval 39-107; the sequence is VREFLHKKLA…PVQINIEEVR (69 aa).

This sequence belongs to the universal ribosomal protein uS3 family. As to quaternary structure, part of the 30S ribosomal subunit. Forms a tight complex with proteins S10 and S14.

Binds the lower part of the 30S subunit head. Binds mRNA in the 70S ribosome, positioning it for translation. The protein is Small ribosomal subunit protein uS3 of Francisella tularensis subsp. mediasiatica (strain FSC147).